We begin with the raw amino-acid sequence, 430 residues long: Aspartate aminotransferase, mitochondrial (430 aa).

A mitochondrion-targeting transit peptide spans 1 to 29; the sequence is MALLHSGRFLSGVAAAFHPGLAAAASARA. A Phosphothreonine modification is found at T48. Residue K59 is modified to N6-acetyllysine. G65 serves as a coordination point for substrate. The residue at position 73 (K73) is an N6-acetyllysine; alternate. Residue K73 is modified to N6-succinyllysine; alternate. K82 is modified (N6-acetyllysine). K90 is subject to N6-acetyllysine; alternate. An N6-succinyllysine; alternate modification is found at K90. Y96 bears the 3'-nitrotyrosine; alternate mark. The residue at position 96 (Y96) is a Phosphotyrosine; alternate. N6-acetyllysine; alternate occurs at positions 107 and 122. Residues K107 and K122 each carry the N6-succinyllysine; alternate modification. S143 is modified (phosphoserine). Residue K159 is modified to N6-acetyllysine; alternate. K159 bears the N6-succinyllysine; alternate mark. Substrate is bound at residue W162. K185 carries the post-translational modification N6-acetyllysine; alternate. N6-succinyllysine; alternate is present on K185. Residue N215 participates in substrate binding. At K227 the chain carries N6-succinyllysine. Position 234 is an N6-acetyllysine (K234). N6-acetyllysine; alternate is present on residues K279 and K296. Residue K279 is modified to N6-(pyridoxal phosphate)lysine; alternate. K296 carries the N6-succinyllysine; alternate modification. K302 is modified (N6-acetyllysine). K309 bears the N6-acetyllysine; alternate mark. Residue K309 is modified to N6-succinyllysine; alternate. Asymmetric dimethylarginine is present on R313. An N6-acetyllysine; alternate modification is found at K338. Residue K338 is modified to N6-succinyllysine; alternate. K345 is subject to N6-acetyllysine. The residue at position 363 (K363) is an N6-acetyllysine; alternate. N6-succinyllysine; alternate is present on K363. 2 positions are modified to N6-acetyllysine: K364 and K387. N6-acetyllysine; alternate occurs at positions 396 and 404. An N6-succinyllysine; alternate mark is found at K396 and K404. R407 serves as a coordination point for substrate.

This sequence belongs to the class-I pyridoxal-phosphate-dependent aminotransferase family. Homodimer. Pyridoxal 5'-phosphate is required as a cofactor.

It localises to the mitochondrion matrix. The protein localises to the cell membrane. The enzyme catalyses L-aspartate + 2-oxoglutarate = oxaloacetate + L-glutamate. It catalyses the reaction L-kynurenine + 2-oxoglutarate = 4-(2-aminophenyl)-2,4-dioxobutanoate + L-glutamate. In terms of biological role, catalyzes the irreversible transamination of the L-tryptophan metabolite L-kynurenine to form kynurenic acid (KA). As a member of the malate-aspartate shuttle, it has a key role in the intracellular NAD(H) redox balance. Is important for metabolite exchange between mitochondria and cytosol, and for amino acid metabolism. Facilitates cellular uptake of long-chain free fatty acids. This Bos taurus (Bovine) protein is Aspartate aminotransferase, mitochondrial (GOT2).